We begin with the raw amino-acid sequence, 463 residues long: Glycine--tRNA ligase (463 aa).

Substrate-binding residues include R98 and E174. Residues 206-208 (RNE), 216-221 (FRTREF), 290-291 (EL), and 334-337 (GADR) each bind ATP. 221–225 (FEQME) is a binding site for substrate. 330–334 (EPSLG) contacts substrate.

It belongs to the class-II aminoacyl-tRNA synthetase family. In terms of assembly, homodimer.

Its subcellular location is the cytoplasm. It catalyses the reaction tRNA(Gly) + glycine + ATP = glycyl-tRNA(Gly) + AMP + diphosphate. Functionally, catalyzes the attachment of glycine to tRNA(Gly). This Staphylococcus saprophyticus subsp. saprophyticus (strain ATCC 15305 / DSM 20229 / NCIMB 8711 / NCTC 7292 / S-41) protein is Glycine--tRNA ligase.